Here is a 604-residue protein sequence, read N- to C-terminus: Elongation factor 4 (604 aa).

Residues 7–189 (SRIRNFSIIA…SIVHLVPPPD (183 aa)) form the tr-type G domain. Residues 19–24 (DHGKST) and 136–139 (NKID) contribute to the GTP site.

This sequence belongs to the TRAFAC class translation factor GTPase superfamily. Classic translation factor GTPase family. LepA subfamily.

Its subcellular location is the cell inner membrane. It catalyses the reaction GTP + H2O = GDP + phosphate + H(+). Functionally, required for accurate and efficient protein synthesis under certain stress conditions. May act as a fidelity factor of the translation reaction, by catalyzing a one-codon backward translocation of tRNAs on improperly translocated ribosomes. Back-translocation proceeds from a post-translocation (POST) complex to a pre-translocation (PRE) complex, thus giving elongation factor G a second chance to translocate the tRNAs correctly. Binds to ribosomes in a GTP-dependent manner. The sequence is that of Elongation factor 4 from Gloeothece citriformis (strain PCC 7424) (Cyanothece sp. (strain PCC 7424)).